The primary structure comprises 843 residues: Taste receptor type 1 member 2 (843 aa).

A signal peptide spans 1–19 (MGPQARTLHLLFLLLHALP). The Extracellular portion of the chain corresponds to 20 to 570 (KPVMLVGNSD…AFLEWHEVPT (551 aa)). N-linked (GlcNAc...) asparagine glycans are attached at residues N87, N296, N316, N355, N372, N432, N484, N491, and N531. A helical membrane pass occupies residues 571–591 (IVVTILAALGFISTLAILLIF). Topologically, residues 592–606 (WRHFQTPMVRSAGGP) are cytoplasmic. A helical transmembrane segment spans residues 607–627 (MCFLMLVPLLLAFGMVPVYVG). Topologically, residues 628–642 (PPTVFSCFCRQAFFT) are extracellular. Residues 643–663 (VCFSVCLSCITVRSFQIVCVF) traverse the membrane as a helical segment. Residues 664–682 (KMARRLPSAYGFWMRYHGP) are Cytoplasmic-facing. A helical transmembrane segment spans residues 683-703 (YVFVAFITAVKVALVAGNMLA). Topologically, residues 704–731 (TTINPIGRTDPDDPNIIILSCHPNYRNG) are extracellular. A helical membrane pass occupies residues 732 to 752 (LLFNTSMDLLLSVLGFSFAYV). The Cytoplasmic portion of the chain corresponds to 753–764 (GKELPTNYNEAK). A helical transmembrane segment spans residues 765-785 (FITLSMTFSFTSSISLCTFMS). Residues 786-789 (VHDG) lie on the Extracellular side of the membrane. The chain crosses the membrane as a helical span at residues 790-810 (VLVTIMDLLVTVLNFLAIGLG). The Cytoplasmic portion of the chain corresponds to 811-843 (YFGPKCYMILFYPERNTSAYFNSMIQGYTMRKS).

Belongs to the G-protein coupled receptor 3 family. TAS1R subfamily. Forms heterodimers with TAS1R3. Expressed mainly in circumvallate and foliate taste papillae.

The protein localises to the cell membrane. Its function is as follows. Putative taste receptor. TAS1R2/TAS1R3 recognizes diverse natural and synthetic sweeteners. The polypeptide is Taste receptor type 1 member 2 (Tas1r2) (Mus musculus (Mouse)).